We begin with the raw amino-acid sequence, 66 residues long: Beta-toxin Cbo1 (66 aa).

The LCN-type CS-alpha/beta domain maps to Lys1–Asn66. 4 cysteine pairs are disulfide-bonded: Cys12–Cys65, Cys16–Cys41, Cys25–Cys46, and Cys29–Cys48. Asn66 carries the post-translational modification Asparagine amide.

Belongs to the long (4 C-C) scorpion toxin superfamily. Sodium channel inhibitor family. Beta subfamily. In terms of tissue distribution, expressed by the venom gland.

The protein localises to the secreted. Beta toxins bind voltage-independently at site-4 of sodium channels and shift the voltage of activation toward more negative potentials thereby affecting sodium channel activation and promoting spontaneous and repetitive firing. Is active on the human voltage-gated sodium channel Nav1.6/SCN8A when tested at 200 nM. In vivo, is toxic to mice when intraperitoneally injected. This is Beta-toxin Cbo1 from Centruroides bonito (Scorpion).